The following is a 330-amino-acid chain: Aspartate--ammonia ligase (330 aa).

The protein belongs to the class-II aminoacyl-tRNA synthetase family. AsnA subfamily.

It is found in the cytoplasm. The enzyme catalyses L-aspartate + NH4(+) + ATP = L-asparagine + AMP + diphosphate + H(+). It participates in amino-acid biosynthesis; L-asparagine biosynthesis; L-asparagine from L-aspartate (ammonia route): step 1/1. This is Aspartate--ammonia ligase from Salmonella newport (strain SL254).